A 27-amino-acid chain; its full sequence is Larval-specific very high density lipoprotein (27 aa).

As to quaternary structure, homodimer. Hemolymph.

It is found in the secreted. The protein localises to the extracellular space. Functionally, unknown (it might play a role in lipid transport and/or storage protein metabolism during metamorphosis). This chain is Larval-specific very high density lipoprotein, found in Apis mellifera (Honeybee).